Reading from the N-terminus, the 457-residue chain is Bifunctional protein GlmU (457 aa).

Residues 1–230 (MPLSLPLHIV…AQEVEGVNDL (230 aa)) are pyrophosphorylase. Residues 12-15 (LAAG), lysine 26, glutamine 78, 83-84 (GT), 105-107 (YGD), glycine 140, glutamate 155, asparagine 170, and asparagine 228 each bind UDP-N-acetyl-alpha-D-glucosamine. Aspartate 107 contributes to the Mg(2+) binding site. Asparagine 228 provides a ligand contact to Mg(2+). Positions 231 to 251 (WQLTQLERAWQIRAARALCLQ) are linker. Residues 252–457 (GARVADPARL…DGWQRPKKKT (206 aa)) are N-acetyltransferase. UDP-N-acetyl-alpha-D-glucosamine contacts are provided by arginine 334 and lysine 352. Histidine 364 acts as the Proton acceptor in catalysis. Positions 367 and 378 each coordinate UDP-N-acetyl-alpha-D-glucosamine. Acetyl-CoA-binding positions include alanine 381, 387–388 (NY), serine 406, alanine 424, and arginine 441.

It in the N-terminal section; belongs to the N-acetylglucosamine-1-phosphate uridyltransferase family. This sequence in the C-terminal section; belongs to the transferase hexapeptide repeat family. Homotrimer. It depends on Mg(2+) as a cofactor.

The protein localises to the cytoplasm. It catalyses the reaction alpha-D-glucosamine 1-phosphate + acetyl-CoA = N-acetyl-alpha-D-glucosamine 1-phosphate + CoA + H(+). The enzyme catalyses N-acetyl-alpha-D-glucosamine 1-phosphate + UTP + H(+) = UDP-N-acetyl-alpha-D-glucosamine + diphosphate. The protein operates within nucleotide-sugar biosynthesis; UDP-N-acetyl-alpha-D-glucosamine biosynthesis; N-acetyl-alpha-D-glucosamine 1-phosphate from alpha-D-glucosamine 6-phosphate (route II): step 2/2. It functions in the pathway nucleotide-sugar biosynthesis; UDP-N-acetyl-alpha-D-glucosamine biosynthesis; UDP-N-acetyl-alpha-D-glucosamine from N-acetyl-alpha-D-glucosamine 1-phosphate: step 1/1. Its pathway is bacterial outer membrane biogenesis; LPS lipid A biosynthesis. In terms of biological role, catalyzes the last two sequential reactions in the de novo biosynthetic pathway for UDP-N-acetylglucosamine (UDP-GlcNAc). The C-terminal domain catalyzes the transfer of acetyl group from acetyl coenzyme A to glucosamine-1-phosphate (GlcN-1-P) to produce N-acetylglucosamine-1-phosphate (GlcNAc-1-P), which is converted into UDP-GlcNAc by the transfer of uridine 5-monophosphate (from uridine 5-triphosphate), a reaction catalyzed by the N-terminal domain. The protein is Bifunctional protein GlmU of Xylella fastidiosa (strain M23).